The chain runs to 292 residues: Nanos homolog 1 (292 aa).

2 disordered regions span residues 1-41 (MEAF…QPFS) and 68-121 (GGNG…SRGR). The tract at residues 40–56 (FSSWNDYLGLATLITKA) is essential for its translational repressor activity. Residues 76–87 (PPSSSSSSCCSP) are compositionally biased toward low complexity. The span at 104-115 (DYDEDDDDDSDE) shows a compositional bias: acidic residues. Residues 213–267 (VCVFCRNNKEAMALYTTHILKGPDGRVLCPVLRRYTCPLCGASGDNAHTIKYCPL) form a Nanos-type zinc finger. The Zn(2+) site is built by C214, C217, H230, C241, C249, C252, H260, and C265. 2 short sequence motifs (C2HC) span residues 214 to 241 (CVFC…RVLC) and 249 to 265 (CPLC…IKYC). The disordered stretch occupies residues 268 to 292 (SKVPPPPARPPPRSARDGPPGKKLR). Over residues 269–280 (KVPPPPARPPPR) the composition is skewed to pro residues. The segment covering 281–292 (SARDGPPGKKLR) has biased composition (basic and acidic residues).

It belongs to the nanos family. As to quaternary structure, interacts with PUM2, SNAPIN and CTNNB1. Interacts (via N-terminal region) with CTNND1. Interacts with DDX20 (via N-terminal region). In terms of tissue distribution, testis and ovary (at protein level). Predominantly expressed in testis. Specifically expressed during germline development. In adult tissues, it is mainly expressed in spermatogonia, the stem cells of the germline. Also expressed during meiosis in spermatocytes. Not present in late, post-meiotic stage germ cells. Expressed in fetal ovaries, while it is weakly or not expressed in mature postmeiotic oocytes, suggesting that it may be expressed in premeiotic female germ cells. Expressed at high levels only in the E-cadherin deficient cell lines. Highly expressed in lung carcinomas and mostly detected in invasive tumor cells and its expression correlates with tumor aggressiveness.

Its subcellular location is the cytoplasm. The protein resides in the perinuclear region. In terms of biological role, may act as a translational repressor which regulates translation of specific mRNAs by forming a complex with PUM2 that associates with the 3'-UTR of mRNA targets. Capable of interfering with the proadhesive and anti-invasive functions of E-cadherin. Up-regulates the production of MMP14 to promote tumor cell invasion. The protein is Nanos homolog 1 (NANOS1) of Homo sapiens (Human).